A 419-amino-acid chain; its full sequence is Peptide chain release factor subunit 1 (419 aa).

It belongs to the eukaryotic release factor 1 family. Heterodimer of two subunits, one of which binds GTP.

It localises to the cytoplasm. Its function is as follows. Directs the termination of nascent peptide synthesis (translation) in response to the termination codons UAA, UAG and UGA. This Methanococcus vannielii (strain ATCC 35089 / DSM 1224 / JCM 13029 / OCM 148 / SB) protein is Peptide chain release factor subunit 1.